Here is a 929-residue protein sequence, read N- to C-terminus: LPS-assembly protein LptD (929 aa).

The signal sequence occupies residues 1-24; it reads MKLRFIRSAGWLFLLFCLACNARA. The tract at residues 26–208 is disordered; the sequence is LPPLSSKPEQ…EAGDEKLRLA (183 aa). Over residues 44–74 the composition is skewed to basic and acidic residues; the sequence is GDDKPVVIDTERIRGHHEYESGTRSESELRS. Over residues 154-164 the composition is skewed to polar residues; the sequence is RTQSAPRTLSA. The span at 181-208 shows a compositional bias: basic and acidic residues; sequence DQDRPGFAEGERIGGHREEAGDEKLRLA.

Belongs to the LptD family. Component of the lipopolysaccharide transport and assembly complex. Interacts with LptE and LptA.

The protein resides in the cell outer membrane. Functionally, together with LptE, is involved in the assembly of lipopolysaccharide (LPS) at the surface of the outer membrane. The sequence is that of LPS-assembly protein LptD from Nitrosospira multiformis (strain ATCC 25196 / NCIMB 11849 / C 71).